Consider the following 208-residue polypeptide: Microcin J25-processing protein McjB (208 aa).

The protein resides in the cytoplasm. Its function is as follows. Along with McjC, necessary and sufficient to process the inactive microcin J25 (McjA) precursor into the active peptide. This chain is Microcin J25-processing protein McjB (mcjB), found in Escherichia coli.